Here is a 595-residue protein sequence, read N- to C-terminus: uncharacterized protein (595 aa).

9 helical membrane passes run 64–84 (VVFL…LIVF), 86–106 (IFYA…IGVL), 239–259 (FYVI…PVAS), 281–301 (FYLW…GILP), 334–354 (VHFI…LFFI), 368–388 (MFGI…HFII), 504–524 (FIYV…SYIM), 547–567 (YLFQ…GILT), and 571–591 (IIAG…LFKF).

It to M.jannaschii FlaJ.

It is found in the cell membrane. This is an uncharacterized protein from Methanocaldococcus jannaschii (strain ATCC 43067 / DSM 2661 / JAL-1 / JCM 10045 / NBRC 100440) (Methanococcus jannaschii).